The following is a 110-amino-acid chain: Flagellar hook-basal body complex protein FliE (110 aa).

It belongs to the FliE family.

The protein resides in the bacterial flagellum basal body. In Bordetella petrii (strain ATCC BAA-461 / DSM 12804 / CCUG 43448), this protein is Flagellar hook-basal body complex protein FliE.